The sequence spans 201 residues: 3-isopropylmalate dehydratase small subunit (201 aa).

This sequence belongs to the LeuD family. LeuD type 1 subfamily. In terms of assembly, heterodimer of LeuC and LeuD.

It carries out the reaction (2R,3S)-3-isopropylmalate = (2S)-2-isopropylmalate. Its pathway is amino-acid biosynthesis; L-leucine biosynthesis; L-leucine from 3-methyl-2-oxobutanoate: step 2/4. Functionally, catalyzes the isomerization between 2-isopropylmalate and 3-isopropylmalate, via the formation of 2-isopropylmaleate. The protein is 3-isopropylmalate dehydratase small subunit of Shewanella putrefaciens (strain CN-32 / ATCC BAA-453).